The chain runs to 193 residues: Protein SPEAR3 (193 aa).

Disordered regions lie at residues 1 to 50 (MGSS…GVAQ) and 85 to 104 (GYPS…SSPP). Residues 14 to 26 (SSSSSPTSSSSSP) show a composition bias toward low complexity. The SPL signature appears at 44–52 (RGLGVAQLE). Residues 86 to 101 (YPSIPSSSPSFSYASS) are compositionally biased toward low complexity. An EAR motif is present at residues 187–193 (LDLELRL).

In terms of assembly, interacts with TPL and the TPR corepressors TPR1, TPR2, TPR3, TPR4, and with the TCP transcription factors TCP2, TCP3, TCP4, TCP5, TCP10, TCP13, TCP17 and TCP24. Interacts with SPL and SPEAR2. Expressed in shoot apical meristem, cotyledons and leaves. Detected at the leaf margins and in the vascular bundles at the base of the leaves.

Its subcellular location is the nucleus. Its function is as follows. Transcriptional regulator of leaf development. Acts as an adapter-like transcriptional repressor recruiting TPL/TPR corepressors to inhibit the CIN-like TCP transcription factors. The chain is Protein SPEAR3 from Arabidopsis thaliana (Mouse-ear cress).